A 261-amino-acid polypeptide reads, in one-letter code: Imidazole glycerol phosphate synthase subunit HisF (261 aa).

Catalysis depends on residues Asp-11 and Asp-130.

The protein belongs to the HisA/HisF family. In terms of assembly, heterodimer of HisH and HisF.

Its subcellular location is the cytoplasm. The enzyme catalyses 5-[(5-phospho-1-deoxy-D-ribulos-1-ylimino)methylamino]-1-(5-phospho-beta-D-ribosyl)imidazole-4-carboxamide + L-glutamine = D-erythro-1-(imidazol-4-yl)glycerol 3-phosphate + 5-amino-1-(5-phospho-beta-D-ribosyl)imidazole-4-carboxamide + L-glutamate + H(+). It functions in the pathway amino-acid biosynthesis; L-histidine biosynthesis; L-histidine from 5-phospho-alpha-D-ribose 1-diphosphate: step 5/9. Functionally, IGPS catalyzes the conversion of PRFAR and glutamine to IGP, AICAR and glutamate. The HisF subunit catalyzes the cyclization activity that produces IGP and AICAR from PRFAR using the ammonia provided by the HisH subunit. The protein is Imidazole glycerol phosphate synthase subunit HisF of Heliobacterium modesticaldum (strain ATCC 51547 / Ice1).